Here is a 282-residue protein sequence, read N- to C-terminus: tRNA uridine(34) hydroxylase (282 aa).

The Rhodanese domain maps to 128-222 (EGRPVVMLDT…YFEEVGGDHY (95 aa)). The active-site Cysteine persulfide intermediate is C182.

The protein belongs to the TrhO family.

It catalyses the reaction uridine(34) in tRNA + AH2 + O2 = 5-hydroxyuridine(34) in tRNA + A + H2O. Catalyzes oxygen-dependent 5-hydroxyuridine (ho5U) modification at position 34 in tRNAs. This is tRNA uridine(34) hydroxylase from Cupriavidus pinatubonensis (strain JMP 134 / LMG 1197) (Cupriavidus necator (strain JMP 134)).